Consider the following 253-residue polypeptide: Major prion protein (253 aa).

An N-terminal signal peptide occupies residues 1-22; the sequence is MANLGCWMLVLFVATWSDLGLC. The interaction with ADGRG6 stretch occupies residues 23–38; it reads KKRPKPGGWNTGGSRY. Positions 23–230 are interaction with GRB2, ERI3 and SYN1; that stretch reads KKRPKPGGWN…ESQAYYQRGS (208 aa). Positions 26–108 are disordered; sequence PKPGGWNTGG…WNKPSKPKTN (83 aa). 5 consecutive repeat copies span residues 51-59, 60-67, 68-75, 76-83, and 84-91. A 5 X 8 AA tandem repeats of P-H-G-G-G-W-G-Q region spans residues 51 to 91; sequence PQGGGGWGQPHGGGWGQPHGGGWGQPHGGGWGQPHGGGWGQ. The span at 52-95 shows a compositional bias: gly residues; it reads QGGGGWGQPHGGGWGQPHGGGWGQPHGGGWGQPHGGGWGQGGGT. The Cu(2+) site is built by H61, G62, G63, H69, G70, G71, H77, G78, G79, H85, G86, and G87. C179 and C214 form a disulfide bridge. 2 N-linked (GlcNAc...) asparagine glycosylation sites follow: N181 and N197. S230 is lipidated: GPI-anchor amidated serine. The propeptide at 231–253 is removed in mature form; that stretch reads SMVLFSSPPVILLISFLIFLIVG.

This sequence belongs to the prion family. Monomer and homodimer. Has a tendency to aggregate into amyloid fibrils containing a cross-beta spine, formed by a steric zipper of superposed beta-strands. Soluble oligomers may represent an intermediate stage on the path to fibril formation. Copper binding may promote oligomerization. Interacts with GRB2, APP, ERI3/PRNPIP and SYN1. Mislocalized cytosolically exposed PrP interacts with MGRN1; this interaction alters MGRN1 subcellular location and causes lysosomal enlargement. Interacts with KIAA1191. Interacts with ADGRG6. Post-translationally, the glycosylation pattern (the amount of mono-, di- and non-glycosylated forms or glycoforms) seems to differ in normal and CJD prion.

The protein localises to the cell membrane. It localises to the golgi apparatus. Its function is as follows. Its primary physiological function is unclear. May play a role in neuronal development and synaptic plasticity. May be required for neuronal myelin sheath maintenance. May promote myelin homeostasis through acting as an agonist for ADGRG6 receptor. May play a role in iron uptake and iron homeostasis. Soluble oligomers are toxic to cultured neuroblastoma cells and induce apoptosis (in vitro). Association with GPC1 (via its heparan sulfate chains) targets PRNP to lipid rafts. Also provides Cu(2+) or Zn(2+) for the ascorbate-mediated GPC1 deaminase degradation of its heparan sulfate side chains. The polypeptide is Major prion protein (PRNP) (Homo sapiens (Human)).